Here is a 47-residue protein sequence, read N- to C-terminus: Short neurotoxin D2A (47 aa).

2 cysteine pairs are disulfide-bonded: Cys-3–Cys-24 and Cys-17–Cys-39.

As to expression, expressed by the venom gland.

It is found in the secreted. In Micrurus pyrrhocryptus (Coral snake), this protein is Short neurotoxin D2A.